Here is a 425-residue protein sequence, read N- to C-terminus: Proline--tRNA ligase (425 aa).

This sequence belongs to the class-II aminoacyl-tRNA synthetase family. ProS type 2 subfamily. As to quaternary structure, homodimer.

Its subcellular location is the cytoplasm. It catalyses the reaction tRNA(Pro) + L-proline + ATP = L-prolyl-tRNA(Pro) + AMP + diphosphate. In terms of biological role, catalyzes the attachment of proline to tRNA(Pro) in a two-step reaction: proline is first activated by ATP to form Pro-AMP and then transferred to the acceptor end of tRNA(Pro). The protein is Proline--tRNA ligase of Anaplasma marginale (strain St. Maries).